Here is a 924-residue protein sequence, read N- to C-terminus: Isoleucine--tRNA ligase (924 aa).

A 'HIGH' region motif is present at residues 58 to 68 (PYANGQIHVGH). Glutamate 561 contacts L-isoleucyl-5'-AMP. The short motif at 602-606 (KMSKS) is the 'KMSKS' region element. Residue lysine 605 participates in ATP binding. Zn(2+) is bound by residues cysteine 887, cysteine 890, cysteine 907, and cysteine 910.

The protein belongs to the class-I aminoacyl-tRNA synthetase family. IleS type 1 subfamily. In terms of assembly, monomer. Zn(2+) serves as cofactor.

The protein resides in the cytoplasm. It carries out the reaction tRNA(Ile) + L-isoleucine + ATP = L-isoleucyl-tRNA(Ile) + AMP + diphosphate. In terms of biological role, catalyzes the attachment of isoleucine to tRNA(Ile). As IleRS can inadvertently accommodate and process structurally similar amino acids such as valine, to avoid such errors it has two additional distinct tRNA(Ile)-dependent editing activities. One activity is designated as 'pretransfer' editing and involves the hydrolysis of activated Val-AMP. The other activity is designated 'posttransfer' editing and involves deacylation of mischarged Val-tRNA(Ile). This chain is Isoleucine--tRNA ligase, found in Dichelobacter nodosus (strain VCS1703A).